A 415-amino-acid chain; its full sequence is Lipoyl synthase, mitochondrial (415 aa).

A mitochondrion-targeting transit peptide spans 1–32 (MAASTNRLRFLYSSARTVPQTGSITPISRRTY). Residues 22–32 (GSITPISRRTY) show a composition bias toward polar residues. The tract at residues 22–53 (GSITPISRRTYATTEPSPSATGAPATARKRTN) is disordered. Residues 33-47 (ATTEPSPSATGAPAT) show a composition bias toward low complexity. [4Fe-4S] cluster-binding residues include cysteine 132, cysteine 137, cysteine 143, cysteine 163, cysteine 167, cysteine 170, and serine 378. The Radical SAM core domain maps to 146–367 (GSDKSAATAT…RQRALDMGFL (222 aa)). The interval 395–415 (AAGTAGESVTDSKAAVDEATR) is disordered.

Belongs to the radical SAM superfamily. Lipoyl synthase family. [4Fe-4S] cluster is required as a cofactor.

It is found in the mitochondrion. It catalyses the reaction [[Fe-S] cluster scaffold protein carrying a second [4Fe-4S](2+) cluster] + N(6)-octanoyl-L-lysyl-[protein] + 2 oxidized [2Fe-2S]-[ferredoxin] + 2 S-adenosyl-L-methionine + 4 H(+) = [[Fe-S] cluster scaffold protein] + N(6)-[(R)-dihydrolipoyl]-L-lysyl-[protein] + 4 Fe(3+) + 2 hydrogen sulfide + 2 5'-deoxyadenosine + 2 L-methionine + 2 reduced [2Fe-2S]-[ferredoxin]. It functions in the pathway protein modification; protein lipoylation via endogenous pathway; protein N(6)-(lipoyl)lysine from octanoyl-[acyl-carrier-protein]: step 2/2. In terms of biological role, catalyzes the radical-mediated insertion of two sulfur atoms into the C-6 and C-8 positions of the octanoyl moiety bound to the lipoyl domains of lipoate-dependent enzymes, thereby converting the octanoylated domains into lipoylated derivatives. The polypeptide is Lipoyl synthase, mitochondrial (Aspergillus oryzae (strain ATCC 42149 / RIB 40) (Yellow koji mold)).